Reading from the N-terminus, the 419-residue chain is UDP-N-acetylglucosamine 1-carboxyvinyltransferase (419 aa).

22 to 23 (KN) provides a ligand contact to phosphoenolpyruvate. Arg95 is a UDP-N-acetyl-alpha-D-glucosamine binding site. Catalysis depends on Cys119, which acts as the Proton donor. Position 119 is a 2-(S-cysteinyl)pyruvic acid O-phosphothioketal (Cys119). UDP-N-acetyl-alpha-D-glucosamine contacts are provided by residues 164–167 (KVSV), Asp308, and Ile330.

The protein belongs to the EPSP synthase family. MurA subfamily.

The protein localises to the cytoplasm. The enzyme catalyses phosphoenolpyruvate + UDP-N-acetyl-alpha-D-glucosamine = UDP-N-acetyl-3-O-(1-carboxyvinyl)-alpha-D-glucosamine + phosphate. The protein operates within cell wall biogenesis; peptidoglycan biosynthesis. Its function is as follows. Cell wall formation. Adds enolpyruvyl to UDP-N-acetylglucosamine. This Rickettsia peacockii (strain Rustic) protein is UDP-N-acetylglucosamine 1-carboxyvinyltransferase.